The sequence spans 835 residues: Axin-1 (835 aa).

The segment at 16-60 (LGSSFTEDAPRPPVPGEEGDLVSSDGRQYNHSFYSSKSDSLKNEA) is disordered. Over residues 40–53 (DGRQYNHSFYSSKS) the composition is skewed to polar residues. In terms of domain architecture, RGS spans 92 to 214 (SLHSLLDDQD…LKSDIYLEYT (123 aa)). Residues 318–349 (ATSANDSEQQSMSSDADTLSLTDSSVDGVPPY) form a disordered region. The segment covering 328 to 344 (SMSSDADTLSLTDSSVD) has biased composition (low complexity). The tract at residues 351–436 (YRKPHRREIH…DADISTGPSL (86 aa)) is interaction with GSK3B. The interaction with beta-catenin stretch occupies residues 437 to 512 (ANHRVPPAVH…SPDGLPAGKI (76 aa)). Disordered stretches follow at residues 485 to 530 (KTPG…QARQ) and 602 to 627 (GYSSKGSTLSKRPVRKGEDGRNFEMR). The span at 616 to 627 (RKGEDGRNFEMR) shows a compositional bias: basic and acidic residues. One can recognise a DIX domain in the interval 753 to 835 (CENITVAYYF…KIIGKVEKVD (83 aa)).

In terms of assembly, homodimer. Interacts with dixdc1. Interacts with hwa; leading to promote the tankyrase-mediated degradation of axin1. In terms of processing, ADP-ribosylated by tankyrase tnks and tnks2. Poly-ADP-ribosylated protein is recognized by rnf146, followed by ubiquitination at 'Lys-48' and subsequent activation of the Wnt signaling pathway. Ubiquitinated by rnf146 when poly-ADP-ribosylated, leading to its degradation and subsequent activation of the Wnt signaling pathway.

The protein localises to the cytoplasm. It localises to the nucleus. The protein resides in the membrane. Its subcellular location is the cell membrane. Functionally, component of the beta-catenin destruction complex required for regulating ctnnb1 levels through phosphorylation and ubiquitination, and modulating Wnt-signaling. Controls dorsoventral patterning via two opposing effects: down-regulates ctnnb1 to inhibit the Wnt signaling pathway and ventralize embryos, but also dorsalizes embryos by activating a Wnt-independent JNK signaling pathway. The chain is Axin-1 (axin1) from Danio rerio (Zebrafish).